A 729-amino-acid polypeptide reads, in one-letter code: MDAKTNDGKAGQCPFTSGRGHKNRDWWPEQLDVQVLHQKSNLSNPMGRDFDYASAFASLDLNAVIADLKALMTDSQDWWPADFGHYGGLMVRMAWHSAGTYRITDGRGGAGGGQQRFAPLNSWPDNVLLDRARRLLWPIKQKYGRKISWADLYVLAGNAALESMGFKPLGFAGGRVDEWEPQELFWGPEGAWLGDERYSGERELAEPLAAVQMGLIYVNPEGPNGQPDPLAAAKDIRETFLRMAMNDEETVALIAGGHTFGKTHGAGDASLVGPVPDSAPIEDQGLGWKGRFGTGKGADAIGSGLEVTWTQTPTKWDNNFFDTLFGFEWELTKSPAGAHQWRAKDAPAITPDPFDESKKHVPTMLTTDLSLRFDPIYGEISKRFHENPDQFADAFARAWFKLTHRDMGPRDRYLGPLVPKEVMIWQDPIPAVDHELVDDNDIADLKAKILASGCTVAQLVSTAWASASTFRGSDKRGGANGARIRLAPQKDWEVNQPIQLKAVLAKLEEIQAEFNDAQTGGKKVSLADLIVLGGSAAVEKAARDAGIDLKVPFTPGRMDASLDQTDVESFAPLEPRADGFRNYISDRHQFMAPEEALVDRAQLLNLTGPEMTVLVGGLRVLGANAADSRHGVFTTRPGKLTNDFFVNLLTMDTEWQPVAGQDGVYESRDRKTGTLKWTGTRVDLIFGSHSQLRAFAEVYACADSGEKFANDFAAAWAKVMNADRFDLKA.

The segment at 1 to 24 (MDAKTNDGKAGQCPFTSGRGHKNR) is disordered. The segment at residues 95–217 (WHSAGTYRIT…LAAVQMGLIY (123 aa)) is a cross-link (tryptophyl-tyrosyl-methioninium (Trp-Tyr) (with M-243)). The Proton acceptor role is filled by His-96. The segment at residues 217–243 (YVNPEGPNGQPDPLAAAKDIRETFLRM) is a cross-link (tryptophyl-tyrosyl-methioninium (Tyr-Met) (with W-95)). Residue His-258 coordinates heme b.

The protein belongs to the peroxidase family. Peroxidase/catalase subfamily. In terms of assembly, homodimer or homotetramer. Heme b serves as cofactor. In terms of processing, formation of the three residue Trp-Tyr-Met cross-link is important for the catalase, but not the peroxidase activity of the enzyme.

The catalysed reaction is H2O2 + AH2 = A + 2 H2O. The enzyme catalyses 2 H2O2 = O2 + 2 H2O. Functionally, bifunctional enzyme with both catalase and broad-spectrum peroxidase activity. This chain is Catalase-peroxidase, found in Nitrobacter winogradskyi (strain ATCC 25391 / DSM 10237 / CIP 104748 / NCIMB 11846 / Nb-255).